Reading from the N-terminus, the 296-residue chain is UDP-N-acetylglucosamine transporter TMEM241 homolog (296 aa).

Transmembrane regions (helical) follow at residues 7–29, 41–61, 67–87, 93–113, 126–146, 147–167, 187–207, 217–237, 248–266, and 272–291; these read AVGL…VLSV, WQTL…WLEI, SDVV…YAGS, LPIP…YGFQ, IFSI…DPQF, DADG…YKVF, VFSV…ISAL, FHSG…ASVK, ASWN…LIYF, and VPLT…LVYA.

This sequence belongs to the nucleotide-sugar transporter family. SLC35A subfamily.

It localises to the golgi apparatus. The protein resides in the cis-Golgi network membrane. Functionally, golgi-localized UDP-N-acetylglucosamine (UDP-GlcNAc) transporter that transports UDP-N-acetylglucosamine into Golgi lumen. The protein is UDP-N-acetylglucosamine transporter TMEM241 homolog (tmem241) of Xenopus laevis (African clawed frog).